Reading from the N-terminus, the 358-residue chain is Sesquiterpene synthase Agr3 (358 aa).

4 residues coordinate Mg(2+): Asp99, Asn246, Ser250, and Glu254. Positions 99 to 103 (DNISD) match the DDXXD motif motif. 2 residues coordinate (2E,6E)-farnesyl diphosphate: Arg334 and Tyr335.

This sequence belongs to the terpene synthase family. Mg(2+) serves as cofactor.

It catalyses the reaction (2E,6E)-farnesyl diphosphate = alpha-muurolene + diphosphate. The catalysed reaction is (2E,6E)-farnesyl diphosphate = gamma-muurolene + diphosphate. The enzyme catalyses (2E,6E)-farnesyl diphosphate = delta-cadinene + diphosphate. Terpene cyclase that catalyzes the cyclization of farnesyl diphosphate (FPP) to various sesquiterpenes, including alpha-muurolene, gamma-muurolene, germacrene, delta-cadinene, delta-cadinol and cubenol. The sequence is that of Sesquiterpene synthase Agr3 from Cyclocybe aegerita (Black poplar mushroom).